The chain runs to 353 residues: Thiamine-phosphate synthase (353 aa).

The unknown stretch occupies residues 1–128 (MKSMPVAPIA…AASAAAIRYG (128 aa)). The segment at 129–353 (LYDLEVTVLQ…TSLQLLEALR (225 aa)) is thiamine-phosphate synthase. Residues 185–189 (QYRNK) and Asn-217 each bind 4-amino-2-methyl-5-(diphosphooxymethyl)pyrimidine. Mg(2+) contacts are provided by Asp-218 and Asp-237. Ser-256 contacts 4-amino-2-methyl-5-(diphosphooxymethyl)pyrimidine. 282–284 (TAT) provides a ligand contact to 2-[(2R,5Z)-2-carboxy-4-methylthiazol-5(2H)-ylidene]ethyl phosphate. A 4-amino-2-methyl-5-(diphosphooxymethyl)pyrimidine-binding site is contributed by Lys-285. Gly-312 provides a ligand contact to 2-[(2R,5Z)-2-carboxy-4-methylthiazol-5(2H)-ylidene]ethyl phosphate.

Belongs to the thiamine-phosphate synthase family. It depends on Mg(2+) as a cofactor.

The enzyme catalyses 2-[(2R,5Z)-2-carboxy-4-methylthiazol-5(2H)-ylidene]ethyl phosphate + 4-amino-2-methyl-5-(diphosphooxymethyl)pyrimidine + 2 H(+) = thiamine phosphate + CO2 + diphosphate. It carries out the reaction 2-(2-carboxy-4-methylthiazol-5-yl)ethyl phosphate + 4-amino-2-methyl-5-(diphosphooxymethyl)pyrimidine + 2 H(+) = thiamine phosphate + CO2 + diphosphate. It catalyses the reaction 4-methyl-5-(2-phosphooxyethyl)-thiazole + 4-amino-2-methyl-5-(diphosphooxymethyl)pyrimidine + H(+) = thiamine phosphate + diphosphate. The protein operates within cofactor biosynthesis; thiamine diphosphate biosynthesis; thiamine phosphate from 4-amino-2-methyl-5-diphosphomethylpyrimidine and 4-methyl-5-(2-phosphoethyl)-thiazole: step 1/1. Its function is as follows. Condenses 4-methyl-5-(beta-hydroxyethyl)thiazole monophosphate (THZ-P) and 2-methyl-4-amino-5-hydroxymethyl pyrimidine pyrophosphate (HMP-PP) to form thiamine monophosphate (TMP). The protein is Thiamine-phosphate synthase of Prochlorococcus marinus (strain MIT 9303).